Reading from the N-terminus, the 1749-residue chain is MHLKHLRTLLSPQDGAAKVTCMAWSQNNAKFAVCTVDRVVLLYDEHGERRDKFSTKPADMKYGRKSYMVKGMAFSPDSTKIAIGQTDNIIYVYKIGEDWGDKKVICNKFIQTSAVTCLQWPAEYIIVFGLAEGKVRLANTKTNKSSTIYGTESYVVSLTTNCSGKGILSGHADGTIVRYFFDDEGSGESQGKLVNHPCPPYALAWATNSIVAAGCDRKIVAYGKEGHMLQTFDYSRDPQEREFTTAVSSPGGQSVVLGSYDRLRVFNWIPRRSIWEEAKPKEITNLYTITALAWKRDGSRLCVGTLCGGVEQFDCCLRRSIYKNKFELTYVGPSQVIVKNLSSGTRVVLKSHYGYEVEEVKILGKERYLVAHTSETLLLGDLNTNRLSEIAWQGSGGNEKYFFENENVCMIFNAGELTLVEYGNNDTLGSVRTEFMNPHLISVRINERCQRGTEDNKKLAYLIDIKTIAIVDLIGGYNIGTVSHESRVDWLELNETGHKLLFRDRKLRLHLYDIESCSKTMILNFCSYMQWVPGSDVLVAQNRNSLCVWYNIEAPERVTMFTIRGDVIGLERGGGKTEVMVMEGVTTVAYTLDEGLIEFGTAIDDGNYIRATAFLETLEMTPETEAMWKTLSKLALEARQLHIAERCFSALGQVAKARFLHETNEIADQVSREYGGEGTDFYQVRARLAMLEKNYKLAEMIFLEQNAVEEAMGMYQELHRWDECIAVAEAKGHPALEKLRRSYYQWLMDTQQEERAGELQESQGDGLAAISLYLKAGLPAKAARLVLTREELLANTELVEHITAALIKGELYERAGDLFEKIHNPQKALECYRKGNAFMKAVELARLAFPVEVVKLEEAWGDHLVQQKQLDAAINHYIEARCSIKAIEAALGARQWKKAIYILDLQDRNTASKYYPLVAQHYASLQEYEIAEELYTKGDRTKDAIDMYTQAGRWEQAHKLAMKCMRPEDVSVLYITQAQEMEKQGKYREAERLYVTVQEPDLAITMYKKHKLYDDMIRLVGKHHPDLLSDTHLHLGKELEAEGRLQEAEYHYLEAQEWKATVNMYRASGLWEEAYRVARTQGGANAHKHVAYLWAKSLGGEAAVRLLNKLGLLEAAVDHAADNCSFEFAFELSRLALKHKTPEVHLKYAMFLEDEGKFEEAEAEFIRAGKPKEAVLMFVHNQDWEAAQRVAEAHDPDSVAEVLVGQARGALEEKDFQKAEGLLLRAQRPGLALNYYKEAGLWSDALRICKDYVPSQLEALQEEYEREATKKGARGVEGFVEQARHWEQAGEYSRAVDCYLKVRDSGNSGLAEKCWMKAAELSIKFLPPQRNMEVVLAVGPQLIGIGKHSAAAELYLNLDLVKEAIDAFIEGEEWNKAKRVAKELDPRYEDYVDQHYKEFLKNQGKVDSLVGVDVIAALDLYVEQGQWDKCIETATKQNYKILHKYVALYATHLIREGSSAQALALYVQHGAPANPQNFNIYKRIFTDMVSSPGTNCAEAYHSWADLRDVLFNLCENLVKSSEANSPAHEEFKTMLLIAHYYATRSAAQSVKQLETVAARLSVSLLRHTQLLPVDKAFYEAGIAAKAVGWDNMAFIFLNRFLDLTDAIEEGTLDGLDHSDFQDTDIPFEVPLPAKQHVPEAEREEVRDWVLTVSMDQRLEQVLPRDERGAYEASLVAASTGVRALPCLITGYPILRNKIEFKRPGKAANKDNWNKFLMAIKTSHSPVCQDVLKFISQWCGGLPSTSFSFQ.

Met1 is subject to N-acetylmethionine. Residue Lys4 forms a Glycyl lysine isopeptide (Lys-Gly) (interchain with G-Cter in SUMO1) linkage. WD repeat units lie at residues 14–53 (DGAA…RDKF), 64–103 (RKSY…GDKK), 110–148 (IQTS…SSTI), 150–191 (GTES…ESQG), 195–233 (NHPC…QTFD), 238–278 (PQER…WEEA), 284–323 (TNLY…SIYK), 483–520 (SHES…CSKT), and 521–559 (MILN…ERVT). The TPR 1 repeat unit spans residues 593-624 (DEGLIEFGTAIDDGNYIRATAFLETLEMTPET). Omega-N-methylarginine is present on Arg672. TPR repeat units lie at residues 692–725 (EKNY…DECI), 809–842 (GELY…MKAV), 854–887 (VKLE…IKAI), 912–945 (SKYY…KDAI), 947–970 (MYTQ…PEDV), 971–1004 (SVLY…DLAI), 1042–1075 (EGRL…EEAY), 1142–1175 (PEVH…KEAV), 1276–1309 (VEGF…GNSG), 1345–1378 (IGKH…NKAK), 1411–1445 (GVDV…LHKY), 1447–1477 (ALYA…NPQN), and 1574–1607 (DKAF…TDAI).

It belongs to the IFT172 family. Interacts with IFT88. Interacts with IFT57. Interacts with RABL2/RABL2A; binds preferentially to GDP-bound RABL2.

Its subcellular location is the cell projection. The protein resides in the cilium. In terms of biological role, required for the maintenance and formation of cilia. Plays an indirect role in hedgehog (Hh) signaling, cilia being required for all activity of the hedgehog pathway. The protein is Intraflagellar transport protein 172 homolog (IFT172) of Homo sapiens (Human).